Here is a 606-residue protein sequence, read N- to C-terminus: Elongation factor 4 (606 aa).

In terms of domain architecture, tr-type G spans 11-193 (DKIRNFSIVA…AIVTRLPPPK (183 aa)). GTP contacts are provided by residues 23–28 (DHGKST) and 140–143 (NKVD).

This sequence belongs to the TRAFAC class translation factor GTPase superfamily. Classic translation factor GTPase family. LepA subfamily.

The protein resides in the cell inner membrane. It carries out the reaction GTP + H2O = GDP + phosphate + H(+). Functionally, required for accurate and efficient protein synthesis under certain stress conditions. May act as a fidelity factor of the translation reaction, by catalyzing a one-codon backward translocation of tRNAs on improperly translocated ribosomes. Back-translocation proceeds from a post-translocation (POST) complex to a pre-translocation (PRE) complex, thus giving elongation factor G a second chance to translocate the tRNAs correctly. Binds to ribosomes in a GTP-dependent manner. In Caulobacter vibrioides (strain ATCC 19089 / CIP 103742 / CB 15) (Caulobacter crescentus), this protein is Elongation factor 4.